A 76-amino-acid chain; its full sequence is UPF0248 protein MmarC7_1289 (76 aa).

This sequence belongs to the UPF0248 family.

The sequence is that of UPF0248 protein MmarC7_1289 from Methanococcus maripaludis (strain C7 / ATCC BAA-1331).